The chain runs to 678 residues: Pentatricopeptide repeat-containing protein At5g39980, chloroplastic (678 aa).

The N-terminal 64 residues, 1-64 (MYIEIASSSS…NKKVWRKQPE (64 aa)), are a transit peptide targeting the chloroplast. PPR repeat units follow at residues 154–188 (SVFA…ALAP), 189–223 (DRYT…RVSG), 224–258 (DLVL…GITP), 259–293 (DLVA…GVLP), 294–328 (NTVS…NCAL), 329–363 (DLTT…DIEP), 364–398 (NVVS…DIEQ), 399–433 (NVVT…GIEP), 434–468 (NAIT…GVEI), 469–503 (DQVL…DNIP), 535–569 (DISV…GYFP), 570–604 (DSNV…GCVF), 605–638 (PDEV…DPNV), and 639–674 (NSKE…GILK).

Belongs to the PPR family. P subfamily.

The protein localises to the plastid. Its subcellular location is the chloroplast. The sequence is that of Pentatricopeptide repeat-containing protein At5g39980, chloroplastic from Arabidopsis thaliana (Mouse-ear cress).